A 363-amino-acid chain; its full sequence is MKTICLVGGKLQGFEAAYLSKKAGMKVVLVDKNPQALIRNYADEFYCFDVIKEPEKLLELSKRVDAVLPVNENLACIEFLNSIKEKFSCPVLFDFEAYRISRDKKKSKDYFKSIGVPTPQDRPSKPPYFVKPPCESSSVGARIIYDDKDLEGLEPDTLVEEYVEGEVVSLEVVGDGSHFAVVKETLVHIDETYDCHMVTPLPANPLFRQISHDLAANLPLKGIMDVEAIFGPKGLRVIEIDARFPSQTPTVVYYSSGINLIELLFRAFTDGVEEIRAIPENKYCIYEHLMFGENGVLIPVGEQVLSMGSDYGKFYEEPGIEIFLCKGEYPVFTMVFWGKDREETGAKRCKGLSVLKERFGAVL.

Position 10 (lysine 10) interacts with ATP. 11–12 (LQ) provides a ligand contact to L-lysine. Residues aspartate 31, 49 to 50 (DV), and 72 to 73 (EN) each bind ATP. Position 72 (glutamate 72) interacts with L-lysine. ADP contacts are provided by residues lysine 104, lysine 131, serine 138, and 160 to 163 (EEYV). D-ornithine-binding positions include 169 to 171 (SLE) and aspartate 225. The Mg(2+) site is built by glutamate 227, glutamate 239, and aspartate 241. Glutamate 239 provides a ligand contact to ADP. Residues 243–248 (RFPSQT) and glutamate 302 each bind D-ornithine. Residues serine 246 and glutamate 302 each coordinate L-lysine.

The protein belongs to the PylC family. Mg(2+) serves as cofactor.

The enzyme catalyses (3R)-3-methyl-D-ornithine + L-lysine + ATP = (3R)-3-methyl-D-ornithyl-N(6)-L-lysine + ADP + phosphate + H(+). It participates in amino-acid biosynthesis; L-pyrrolysine biosynthesis. Functionally, is required for the biosynthesis of pyrrolysine. Catalyzes the ATP-dependent ligation between (3R)-3-methyl-D-ornithine and L-lysine, leading to (3R)-3-methyl-D-ornithyl-N6-L-lysine. This is 3-methyl-D-ornithine--L-lysine ligase from Methanosarcina barkeri (strain Fusaro / DSM 804).